The chain runs to 147 residues: Ubiquitin-like-conjugating enzyme ATG10 (147 aa).

Cys116 serves as the catalytic Glycyl thioester intermediate.

Belongs to the ATG10 family. Forms homooligomers. Interacts with ATG10. Interacts with ATG7 and ATG12.

It is found in the preautophagosomal structure membrane. In terms of biological role, E2-like enzyme required for the cytoplasm to vacuole transport (Cvt), autophagy and nucleophagy. Acts as an E2-like enzyme that catalyzes the conjugation of ATG12 to ATG5. ATG12 conjugation to ATG5 is required for proper localization of ATG8 to the preautophagosomal structure (PAS). Likely serves as an ATG5-recognition molecule. The sequence is that of Ubiquitin-like-conjugating enzyme ATG10 from Kluyveromyces marxianus (strain DMKU3-1042 / BCC 29191 / NBRC 104275) (Yeast).